Here is a 297-residue protein sequence, read N- to C-terminus: Putative S-adenosyl-L-methionine-dependent methyltransferase Mmcs_1044 (297 aa).

Residues aspartate 124 and 153–154 contribute to the S-adenosyl-L-methionine site; that span reads DL.

It belongs to the UPF0677 family.

Functionally, exhibits S-adenosyl-L-methionine-dependent methyltransferase activity. In Mycobacterium sp. (strain MCS), this protein is Putative S-adenosyl-L-methionine-dependent methyltransferase Mmcs_1044.